We begin with the raw amino-acid sequence, 59 residues long: Large ribosomal subunit protein bL32 (59 aa).

Belongs to the bacterial ribosomal protein bL32 family.

The sequence is that of Large ribosomal subunit protein bL32 from Anaeromyxobacter dehalogenans (strain 2CP-C).